Here is an 863-residue protein sequence, read N- to C-terminus: MIRFAQREYTDEEIYEILADPVREWFRGKFGTFTPPQRYAVIEIHKGENVLISSPTGSGKTLSAFLAAINELILLGKEGKLEDKIYVLYVSPLRALNNDIRRNLEEPLREIREVAHEMGYDLPEIRVAVRTSDTSSYEKQKMVKKPPHILITTPESLAIALNAPKFSERLKTVKYVIVDEVHALAENKRGTHLMLSLERLQNLAGDFVRIGLSATIHPLEEVAKFVFGFNDDGTPRSGLIVDVSFAKKTEIKVESVVGDLVYTDAATLSEALYKRLDELIEQHRTTLIFTNTRSGAERVAYHLKKKFPKYAELIEAHHSSLSRDVRLEVEEKLKKGELRCVVSSTSLELGIDIGSIDLVVLIGSPKSVNRALQRIGRAGHRLHEVSKGIILVLDRDDLVECTVLAYNARNRRLDRIKIPQNPLDVLVQHLLGMALEKVWDINEAYKLVRRAYPYHNLSFEDFMSVLRYLAGEYAGLEEKKVYAKIWLDEKEGKFGRRGKMTRAIYYMNTGTIPDEAKIEVYTLDRRFIGTVEEEFAERLMPGDIFVLAGRTYEFKKSRGNRIYVEPKEGAKPTIPAWFSEMLPLSFDLALDVQRFRKEVKELLNNPKAEQILMEKYRIDEKAAKAILGYFREQAKYSTIPDDGILLVEEVLEERRAKYFFHTLIGRRANEALSRAFAYLVSKKKRCNVGIAISDNGFMLILPREKRLSEEDIRTLFQLEDLRETLKKALDNTELLKRRFRHVANRGLLILRRYMGRKKSLSRQQLNAQTLLRLLKKNYPDFPLLKEVYREIMEDKMDIKNAELFLSWVKEGKIKIVFEQNELPSPFAFNLEIIGASDVVLMEDRRELIKQLHRKIMAMIGELE.

Positions 30, 37, 60, 61, 179, 180, 377, and 380 each coordinate ATP. A Helicase ATP-binding domain is found at 41-234 (VIEIHKGENV…FVFGFNDDGT (194 aa)). Residues 179 to 182 (DEVH) carry the DEAH box motif. In terms of domain architecture, Helicase C-terminal spans 275-424 (RLDELIEQHR…RIKIPQNPLD (150 aa)). The interval 418-512 (IPQNPLDVLV…AIYYMNTGTI (95 aa)) is WH domain. Positions 513–863 (PDEAKIEVYT…KIMAMIGELE (351 aa)) are domain 4.

It belongs to the Lhr helicase family. Lhr-Core subfamily. As to quaternary structure, monomer.

The catalysed reaction is ATP + H2O = ADP + phosphate + H(+). With respect to regulation, unwinding of dsRNA duplexes is inhibited by AMP-PMP and ATP-gamma-S. Functionally, a DNA:RNA helicase with a significant strand annealing activity, probably involved in DNA repair and RNA transactions. In vitro has a slow helicase activity with a preference for 3'-overhang duplexes; displaces RNA from 3'-overhang DNA:RNA or RNA:RNA duplexes. 3'-tailed double-stranded (ds)DNA is not unwound. The slow helicase activity on RNA duplexes is ATP-independent. Has strand annealing properties in the absence of ATP; forms 3'-overhang DNA:RNA, 3'-overhang dsRNA and 3'-overhang dsDNA duplexes but not 5'-overhang duplexes. A nucleic acid-dependent ATPase; single-stranded (ss)DNA and RNA are equally stimulatory. Binds ssDNA, RNA, dsDNA and dsRNA duplexes. In Thermococcus barophilus (strain DSM 11836 / MP), this protein is ATP-dependent helicase Lhr-Core protein 2.